Reading from the N-terminus, the 182-residue chain is Large ribosomal subunit protein uL6 (182 aa).

This sequence belongs to the universal ribosomal protein uL6 family. As to quaternary structure, part of the 50S ribosomal subunit.

This protein binds to the 23S rRNA, and is important in its secondary structure. It is located near the subunit interface in the base of the L7/L12 stalk, and near the tRNA binding site of the peptidyltransferase center. In Aeropyrum pernix (strain ATCC 700893 / DSM 11879 / JCM 9820 / NBRC 100138 / K1), this protein is Large ribosomal subunit protein uL6.